A 576-amino-acid chain; its full sequence is V-type ATP synthase alpha chain (576 aa).

Gly238 to Thr245 is an ATP binding site.

It belongs to the ATPase alpha/beta chains family.

It carries out the reaction ATP + H2O + 4 H(+)(in) = ADP + phosphate + 5 H(+)(out). Its function is as follows. Produces ATP from ADP in the presence of a proton gradient across the membrane. The V-type alpha chain is a catalytic subunit. In Borrelia duttonii (strain Ly), this protein is V-type ATP synthase alpha chain.